Consider the following 647-residue polypeptide: Threonine--tRNA ligase (647 aa).

The TGS domain maps to Met-1 to Thr-63. The catalytic stretch occupies residues Asp-242–Pro-540. Cys-336, His-387, and His-517 together coordinate Zn(2+).

Belongs to the class-II aminoacyl-tRNA synthetase family. Homodimer. Zn(2+) is required as a cofactor.

It is found in the cytoplasm. The catalysed reaction is tRNA(Thr) + L-threonine + ATP = L-threonyl-tRNA(Thr) + AMP + diphosphate + H(+). Its function is as follows. Catalyzes the attachment of threonine to tRNA(Thr) in a two-step reaction: L-threonine is first activated by ATP to form Thr-AMP and then transferred to the acceptor end of tRNA(Thr). Also edits incorrectly charged L-seryl-tRNA(Thr). The sequence is that of Threonine--tRNA ligase from Staphylococcus carnosus (strain TM300).